The following is an 86-amino-acid chain: Small ribosomal subunit protein bS20 (86 aa).

Positions 1-21 (MANTKSAIKAARKSLRLHDRN) are disordered.

The protein belongs to the bacterial ribosomal protein bS20 family.

Binds directly to 16S ribosomal RNA. In Opitutus terrae (strain DSM 11246 / JCM 15787 / PB90-1), this protein is Small ribosomal subunit protein bS20.